Reading from the N-terminus, the 293-residue chain is G1/S-specific cyclin-D3 (293 aa).

Positions Val27–Leu152 constitute a Cyclin N-terminal domain. The segment at Arg257–Leu293 is disordered. Phosphoserine is present on residues Ser265 and Ser280. Low complexity predominate over residues Pro271–Thr286. A Phosphothreonine modification is found at Thr284.

The protein belongs to the cyclin family. Cyclin D subfamily. As to quaternary structure, interacts with the CDK4 and CDK6 protein kinases to form a serine/threonine kinase holoenzyme complex. The cyclin subunit imparts substrate specificity to the complex. Interacts with ATF5. Interacts with EIF3K. Component of the ternary complex cyclin D/CDK4/CDKN1B required for nuclear translocation and modulation of CDK4-mediated kinase activity. Can form similar complexes with either CDKN1A or CDKN2A. Post-translationally, phosphorylation at Thr-284 by MAP kinases is required for ubiquitination and degradation by the DCX(AMBRA1) complex. In terms of processing, ubiquitinated by the DCX(AMBRA1) complex during the transition from G1 to S cell phase, leading to its degradation: ubiquitination is dependent on Thr-284 phosphorylation. The DCX(AMBRA1) complex represents the major regulator of CCND3 stability during the G1/S transition. Polyubiquitinated by the SCF(FBXL2) complex, leading to proteasomal degradation.

It is found in the nucleus. It localises to the cytoplasm. Its function is as follows. Regulatory component of the cyclin D3-CDK4 (DC) complex that phosphorylates and inhibits members of the retinoblastoma (RB) protein family including RB1 and regulates the cell-cycle during G(1)/S transition. Phosphorylation of RB1 allows dissociation of the transcription factor E2F from the RB/E2F complex and the subsequent transcription of E2F target genes which are responsible for the progression through the G(1) phase. Hypophosphorylates RB1 in early G(1) phase. Cyclin D-CDK4 complexes are major integrators of various mitogenenic and antimitogenic signals. Component of the ternary complex, cyclin D3/CDK4/CDKN1B, required for nuclear translocation and activity of the cyclin D-CDK4 complex. Shows transcriptional coactivator activity with ATF5 independently of CDK4. In Rattus norvegicus (Rat), this protein is G1/S-specific cyclin-D3.